The sequence spans 474 residues: Bifunctional protein HldE (474 aa).

The tract at residues 1 to 318 (MKLSMPRFDQ…RAIQREEGSE (318 aa)) is ribokinase. 194–197 (NLSE) provides a ligand contact to ATP. D263 is an active-site residue. The tract at residues 343–474 (FTNGCFDILH…AIVEKIRKSE (132 aa)) is cytidylyltransferase.

In the N-terminal section; belongs to the carbohydrate kinase PfkB family. This sequence in the C-terminal section; belongs to the cytidylyltransferase family. In terms of assembly, homodimer.

It catalyses the reaction D-glycero-beta-D-manno-heptose 7-phosphate + ATP = D-glycero-beta-D-manno-heptose 1,7-bisphosphate + ADP + H(+). It carries out the reaction D-glycero-beta-D-manno-heptose 1-phosphate + ATP + H(+) = ADP-D-glycero-beta-D-manno-heptose + diphosphate. Its pathway is nucleotide-sugar biosynthesis; ADP-L-glycero-beta-D-manno-heptose biosynthesis; ADP-L-glycero-beta-D-manno-heptose from D-glycero-beta-D-manno-heptose 7-phosphate: step 1/4. It functions in the pathway nucleotide-sugar biosynthesis; ADP-L-glycero-beta-D-manno-heptose biosynthesis; ADP-L-glycero-beta-D-manno-heptose from D-glycero-beta-D-manno-heptose 7-phosphate: step 3/4. Functionally, catalyzes the phosphorylation of D-glycero-D-manno-heptose 7-phosphate at the C-1 position to selectively form D-glycero-beta-D-manno-heptose-1,7-bisphosphate. Its function is as follows. Catalyzes the ADP transfer from ATP to D-glycero-beta-D-manno-heptose 1-phosphate, yielding ADP-D-glycero-beta-D-manno-heptose. The sequence is that of Bifunctional protein HldE from Pseudomonas fluorescens (strain Pf0-1).